The chain runs to 413 residues: Putative competence-damage inducible protein (413 aa).

This sequence belongs to the CinA family.

This chain is Putative competence-damage inducible protein, found in Pediococcus pentosaceus (strain ATCC 25745 / CCUG 21536 / LMG 10740 / 183-1w).